A 58-amino-acid polypeptide reads, in one-letter code: Large ribosomal subunit protein uL30 (58 aa).

This sequence belongs to the universal ribosomal protein uL30 family. Part of the 50S ribosomal subunit.

This chain is Large ribosomal subunit protein uL30, found in Vibrio vulnificus (strain CMCP6).